Consider the following 415-residue polypeptide: Serine hydroxymethyltransferase (415 aa).

(6S)-5,6,7,8-tetrahydrofolate contacts are provided by residues L119 and 123–125 (GHL). Residue K228 is modified to N6-(pyridoxal phosphate)lysine.

The protein belongs to the SHMT family. Homodimer. Pyridoxal 5'-phosphate is required as a cofactor.

Its subcellular location is the cytoplasm. It carries out the reaction (6R)-5,10-methylene-5,6,7,8-tetrahydrofolate + glycine + H2O = (6S)-5,6,7,8-tetrahydrofolate + L-serine. Its pathway is one-carbon metabolism; tetrahydrofolate interconversion. It functions in the pathway amino-acid biosynthesis; glycine biosynthesis; glycine from L-serine: step 1/1. In terms of biological role, catalyzes the reversible interconversion of serine and glycine with tetrahydrofolate (THF) serving as the one-carbon carrier. This reaction serves as the major source of one-carbon groups required for the biosynthesis of purines, thymidylate, methionine, and other important biomolecules. Also exhibits THF-independent aldolase activity toward beta-hydroxyamino acids, producing glycine and aldehydes, via a retro-aldol mechanism. This is Serine hydroxymethyltransferase from Coprothermobacter proteolyticus (strain ATCC 35245 / DSM 5265 / OCM 4 / BT).